Here is a 1295-residue protein sequence, read N- to C-terminus: Protein glp-1 (1295 aa).

A signal peptide spans 1–15 (MRVLLILLAFFAPIA). At 16 to 764 (SQLMGGECGR…NEIDEGWSRS (749 aa)) the chain is on the extracellular side. EGF-like domains are found at residues 19 to 58 (MGGECGREGACSVNGKCYNGKLIETYWCRCKKGFGGAFCE), 117 to 152 (GVNPCDSDPCNNGLCYPFYGGFQCICNNGYGGSYCE), 154 to 190 (GIDHCAQNECAEGSTCVNSVYNYYCDCPIGKSGRYCE), and 190 to 230 (ERTE…EFCN). 37 disulfide bridges follow: Cys23–Cys35, Cys29–Cys46, Cys48–Cys57, Cys121–Cys131, Cys126–Cys140, Cys142–Cys151, Cys158–Cys169, Cys163–Cys178, Cys180–Cys189, Cys201–Cys206, Cys220–Cys229, Cys236–Cys248, Cys242–Cys257, Cys259–Cys268, Cys275–Cys286, Cys280–Cys296, Cys298–Cys307, Cys329–Cys342, Cys336–Cys347, Cys349–Cys358, Cys373–Cys384, Cys378–Cys394, Cys396–Cys405, Cys411–Cys422, Cys416–Cys431, Cys433–Cys442, Cys450–Cys461, Cys455–Cys467, Cys469–Cys478, Cys496–Cys519, Cys501–Cys514, Cys510–Cys526, Cys536–Cys560, Cys542–Cys555, Cys551–Cys567, Cys582–Cys595, and Cys591–Cys607. One can recognise an EGF-like 5; calcium-binding domain in the interval 232–269 (DKNECLIEETCVNNSTCFNLHGDFTCTCKPGYAGKYCE). Residues Asn244 and Asn245 are each glycosylated (N-linked (GlcNAc...) asparagine). 5 consecutive EGF-like domains span residues 271–308 (AIDMCKDYVCQNDGYCAHDSNQMPICYCEQGFTGQRCE), 316–359 (GGIH…DRCE), 369–406 (DIQSCKYNPCVNNATCIDLKNSGYSCHCPLGFYGLNCE), 407–443 (QHLLCTPTTCANGGTCEGVNGVIRCNCPNGFSGDYCE), and 446–479 (DRQLCSRHPCKNGGVCKNTGYCECQYGYTGPTCE). Residue Asn333 is glycosylated (N-linked (GlcNAc...) asparagine). Asn381 is a glycosylation site (N-linked (GlcNAc...) asparagine). LNR repeat units follow at residues 496-532 (CEQRKCMDLASNGICNPECNLEECNFDGGDCSGGQRP), 536-577 (CQYP…CPAH), and 581-612 (HCIERRGDGVCNLECSFIGCGFDGGDCNNGTE). N-linked (GlcNAc...) asparagine glycans are attached at residues Asn609 and Asn675. A helical transmembrane segment spans residues 765 to 786 (QVILFACIAFLAFGTVVAGVIA). The Cytoplasmic portion of the chain corresponds to 787 to 1295 (KNGPERSRKR…AEQMNGSFYC (509 aa)). ANK repeat units lie at residues 961–990 (DENTALMLAVRAHRVRLSVVLLREGANPTI), 994–1023 (SERSALHEAVVNKDLRILRHLLTDKRLLKE), 1030–1062 (NGMTALMLVARELGKHQVEMAELLLSKGAKLDY), 1074–1103 (KGRTALHYAAMHDNEEMVIMLVRRSSNKDK), and 1107–1136 (DGRTPIMLAAKEGCEKTVQYLALNDASLGI). A disordered region spans residues 1177–1244 (IVKSGHGAKS…TTSTPNRMET (68 aa)). The segment covering 1201–1210 (KTPTSAASSR) has biased composition (polar residues). Low complexity predominate over residues 1221–1239 (DGSFSSPSPHYYPTTTSTP).

In terms of assembly, interacts with sel-10. When activated, the glp-1/Notch intracellular domain (NICD) may become a component of a complex consisting of at least the NICD, lag-1 and lag-3. Upon binding its ligands, it is cleaved (S2 cleavage) in its extracellular domain, close to the transmembrane domain. S2 cleavage is probably mediated by the metalloproteases adm-4 and sup-17. It is then cleaved (S3 cleavage) downstream of its transmembrane domain, releasing it from the cell membrane; S3 cleavage requires a multiprotein gamma-secretase complex, which may include presenilin sel-12. In terms of tissue distribution, expressed in the distal mitotic region of the germ line. May be absent from the gonadal distal tip cell (DTC).

The protein localises to the cell membrane. It is found in the cell projection. The protein resides in the axon. Its subcellular location is the nucleus. In terms of biological role, essential signaling protein which has a major role in germline and embryonic development; involved in cell fate decisions that require cell-cell interactions. Probable membrane-bound receptor for putative ligands lag-2 and apx-1. Upon ligand activation, and releasing from the cell membrane, the glp-1/Notch intracellular domain (NICD) probably forms a transcriptional activator complex with lag-1 and lag-3 and regulates expression of various genes; targets in the germline include lst-1 and sygl-1. Involved in the specification of the cell fates of the blastomeres, ABa and ABp. Proper signaling by glp-1 induces ABa descendants to produce anterior pharyngeal cells, and ABp descendants to adopt a different fate. Contributes to the establishment of the dorsal-ventral axis in early embryos. Required in postmitotic neurons in order to maintain the developmentally arrested larval state known as dauer, probably in response to lag-2. Regulates germ cell mitotic proliferation probably by regulating MAP kinase phosphatase lip-1 expression. Required for oocyte growth control. Plays a negative role in lifespan. The chain is Protein glp-1 from Caenorhabditis elegans.